A 652-amino-acid polypeptide reads, in one-letter code: Probable protein phosphatase 2C 19 (652 aa).

The PPM-type phosphatase domain maps to 265-517 (KYVVSSMQGW…DNTTVILVLF (253 aa)). Positions 300, 301, 467, and 508 each coordinate Mn(2+). The tract at residues 524–567 (AVPPVDTDTDTDSHTGDDVDNNDPANEVDPTANAGSDDSNTSDE) is disordered.

Belongs to the PP2C family. Requires Mg(2+) as cofactor. The cofactor is Mn(2+).

The enzyme catalyses O-phospho-L-seryl-[protein] + H2O = L-seryl-[protein] + phosphate. It carries out the reaction O-phospho-L-threonyl-[protein] + H2O = L-threonyl-[protein] + phosphate. This chain is Probable protein phosphatase 2C 19, found in Oryza sativa subsp. japonica (Rice).